A 209-amino-acid polypeptide reads, in one-letter code: Mitochondrial import inner membrane translocase subunit Tim23 (209 aa).

3 helical membrane passes run 73–93 (FELA…FGAM), 125–145 (ALWA…GVII), and 172–194 (GGLR…YALY).

This sequence belongs to the Tim17/Tim22/Tim23 family. As to quaternary structure, component of the TIM23 complex at least composed of TIMM23, TIMM17 (TIMM17A or TIMM17B) and TIMM50; within this complex, directly interacts with TIMM50. The complex interacts with the TIMM44 component of the PAM complex and with DNAJC15. Upon mitochondrial depolarization, interacts with PINK1; the interaction is required for PINK1 accumulation at the outer mitochondrial membrane, kinase activation by autophosphorylation and PRKN recruitement to mitochondria.

It is found in the mitochondrion inner membrane. Essential component of the TIM23 complex, a complex that mediates the translocation of transit peptide-containing proteins across the mitochondrial inner membrane. Has a role in the activation of stress-induced mitophagy by protecting PINK1 from OMA1-mediated degradation and facilitating its accumulation at the outer mitochondrial membrane in response to depolarization. The polypeptide is Mitochondrial import inner membrane translocase subunit Tim23 (TIMM23) (Bos taurus (Bovine)).